Consider the following 47-residue polypeptide: Protein YqgG (47 aa).

The protein is Protein YqgG of Escherichia coli (strain K12).